Reading from the N-terminus, the 456-residue chain is Exodeoxyribonuclease 7 large subunit (456 aa).

Belongs to the XseA family. Heterooligomer composed of large and small subunits.

The protein resides in the cytoplasm. The catalysed reaction is Exonucleolytic cleavage in either 5'- to 3'- or 3'- to 5'-direction to yield nucleoside 5'-phosphates.. Its function is as follows. Bidirectionally degrades single-stranded DNA into large acid-insoluble oligonucleotides, which are then degraded further into small acid-soluble oligonucleotides. This is Exodeoxyribonuclease 7 large subunit from Lactobacillus gasseri (strain ATCC 33323 / DSM 20243 / BCRC 14619 / CIP 102991 / JCM 1131 / KCTC 3163 / NCIMB 11718 / NCTC 13722 / AM63).